The primary structure comprises 459 residues: Cysteine--tRNA ligase (459 aa).

C28 lines the Zn(2+) pocket. The 'HIGH' region motif lies at 30 to 40 (VTIYDLCHIGH). The Zn(2+) site is built by C209, H234, and E238. Residues 266-270 (KMSKS) carry the 'KMSKS' region motif. K269 lines the ATP pocket.

It belongs to the class-I aminoacyl-tRNA synthetase family. In terms of assembly, monomer. It depends on Zn(2+) as a cofactor.

The protein resides in the cytoplasm. The enzyme catalyses tRNA(Cys) + L-cysteine + ATP = L-cysteinyl-tRNA(Cys) + AMP + diphosphate. This is Cysteine--tRNA ligase from Shewanella loihica (strain ATCC BAA-1088 / PV-4).